The chain runs to 378 residues: MSVSGLKAELKFLASIFDKNHERFRIVSWKLDELHCQFLVPPPPPPPGSSLSPPPPLTLHCNITESYPSSSPIWFVDSDDPNLTSVLERLEDTKNNSSLRQQLKWLICDLCRLYNLPKHLDVEMLDQPLPTGQNGTTEEVTSEEEEEEEMAEDIEDLDHYEMKEEEPINGKKSEDEGIEKENLAILEKIRKTQRQDHLNGAVSGSVQASDRLMKELRDVYRSQSYKAGIYSVELINDSLYDWHVKLHKVDSDSPLHSDLQILKEKEGIEYILLNFSFKDNFPFDPPFVRVVLPVLSGGYVLGGGALCMELLTKQGWSSAYSIESVIMQINATLVKGKARVQFGANKNQYNLARAQQSYNSIVQIHEKNGWYTPPKEDG.

Positions 126-152 are disordered; the sequence is DQPLPTGQNGTTEEVTSEEEEEEEMAE. Acidic residues predominate over residues 140-152; sequence VTSEEEEEEEMAE. The UBC core domain maps to 207-371; the sequence is QASDRLMKEL…VQIHEKNGWY (165 aa). Cysteine 307 functions as the Glycyl thioester intermediate in the catalytic mechanism.

The protein belongs to the ubiquitin-conjugating enzyme family. Post-translationally, auto-ubiquitinated in vitro.

Its subcellular location is the cytoplasm. It catalyses the reaction S-ubiquitinyl-[E1 ubiquitin-activating enzyme]-L-cysteine + [E2 ubiquitin-conjugating enzyme]-L-cysteine = [E1 ubiquitin-activating enzyme]-L-cysteine + S-ubiquitinyl-[E2 ubiquitin-conjugating enzyme]-L-cysteine.. It participates in protein modification; protein ubiquitination. Its function is as follows. Accepts ubiquitin from the E1 complex and catalyzes its covalent attachment to other proteins. In vitro catalyzes 'Lys-48'-linked polyubiquitination. This Mus musculus (Mouse) protein is Ubiquitin-conjugating enzyme E2 Q2 (Ube2q2).